We begin with the raw amino-acid sequence, 299 residues long: Pyridoxal 5'-phosphate synthase subunit PdxS (299 aa).

Aspartate 24 lines the D-ribose 5-phosphate pocket. Lysine 81 serves as the catalytic Schiff-base intermediate with D-ribose 5-phosphate. Residue glycine 153 coordinates D-ribose 5-phosphate. Arginine 165 provides a ligand contact to D-glyceraldehyde 3-phosphate. D-ribose 5-phosphate is bound by residues glycine 219 and 240 to 241; that span reads GS.

Belongs to the PdxS/SNZ family. In the presence of PdxT, forms a dodecamer of heterodimers.

It catalyses the reaction aldehydo-D-ribose 5-phosphate + D-glyceraldehyde 3-phosphate + L-glutamine = pyridoxal 5'-phosphate + L-glutamate + phosphate + 3 H2O + H(+). The protein operates within cofactor biosynthesis; pyridoxal 5'-phosphate biosynthesis. Catalyzes the formation of pyridoxal 5'-phosphate from ribose 5-phosphate (RBP), glyceraldehyde 3-phosphate (G3P) and ammonia. The ammonia is provided by the PdxT subunit. Can also use ribulose 5-phosphate and dihydroxyacetone phosphate as substrates, resulting from enzyme-catalyzed isomerization of RBP and G3P, respectively. This chain is Pyridoxal 5'-phosphate synthase subunit PdxS, found in Methanococcus maripaludis (strain DSM 14266 / JCM 13030 / NBRC 101832 / S2 / LL).